Here is a 310-residue protein sequence, read N- to C-terminus: Ornithine carbamoyltransferase (310 aa).

Carbamoyl phosphate-binding positions include 58–61, Gln85, Arg109, and 136–139; these read STRT and HPCQ. L-ornithine-binding positions include Asn167, Asp227, and 231 to 232; that span reads SM. Carbamoyl phosphate is bound by residues 266-267 and Arg294; that span reads CL.

Belongs to the aspartate/ornithine carbamoyltransferase superfamily. OTCase family.

It localises to the cytoplasm. It catalyses the reaction carbamoyl phosphate + L-ornithine = L-citrulline + phosphate + H(+). It participates in amino-acid biosynthesis; L-arginine biosynthesis; L-arginine from L-ornithine and carbamoyl phosphate: step 1/3. Functionally, reversibly catalyzes the transfer of the carbamoyl group from carbamoyl phosphate (CP) to the N(epsilon) atom of ornithine (ORN) to produce L-citrulline. This chain is Ornithine carbamoyltransferase, found in Rhodopseudomonas palustris (strain ATCC BAA-98 / CGA009).